A 962-amino-acid chain; its full sequence is Protocadherin gamma-A4 (962 aa).

The interval 1-24 (MHFILDPEDPGAPQASTEGKPKHR) is disordered. Positions 1 to 59 (MHFILDPEDPGAPQASTEGKPKHRRLRGGVVMAAPPARPDHTRLLQICLLLGVLVEIRA) are cleaved as a signal peptide. Cadherin domains follow at residues 60 to 164 (EQIL…PPSF), 165 to 273 (GTEQ…APVF), 274 to 378 (TQPE…APEV), 379 to 483 (TVTS…PPTF), 484 to 598 (PHAS…YPTF), and 601 to 713 (DGST…KPSA). The Extracellular portion of the chain corresponds to 60–723 (EQILYSVFEE…DPDDSGLTLY (664 aa)). N-linked (GlcNAc...) asparagine glycosylation is found at Asn-450 and Asn-576. The chain crosses the membrane as a helical span at residues 724–744 (LVVAVAAVSCVFLAFVTVLLA). At 745–962 (LKLRRWHKSR…KKKSGKKEKK (218 aa)) the chain is on the cytoplasmic side. Disordered stretches follow at residues 832-871 (KGDP…WPNN) and 932-962 (ATLT…KEKK). Positions 836–871 (NLQQAPPNTDWRFSQAQRPGTSGSQNGDDTGTWPNN) are enriched in polar residues. Over residues 952–962 (NKKKSGKKEKK) the composition is skewed to basic residues.

Its subcellular location is the cell membrane. Its function is as follows. Potential calcium-dependent cell-adhesion protein. May be involved in the establishment and maintenance of specific neuronal connections in the brain. The sequence is that of Protocadherin gamma-A4 (PCDHGA4) from Homo sapiens (Human).